We begin with the raw amino-acid sequence, 900 residues long: Zinc finger protein 574 (900 aa).

C2H2-type zinc fingers lie at residues 16–38, 76–98, and 126–148; these read YVCS…QNSH, YQCL…QELH, and YECV…RQTH. Ser164 bears the Phosphoserine mark. The C2H2-type 4 zinc finger occupies 213–235; the sequence is YKCSECSQLFQMPADFLEHQATH. Over residues 244–254 the composition is skewed to low complexity; it reads AEPATQQETQV. Residues 244 to 306 are disordered; sequence AEPATQQETQ…RRNNSGESGG (63 aa). Residues 273–290 show a composition bias toward basic and acidic residues; that stretch reads HSYELRNELRNGEAIGRD. Phosphoserine is present on Ser301. 10 consecutive C2H2-type zinc fingers follow at residues 312–334, 339–361, 367–389, 395–416, 469–492, 498–520, 526–548, 554–576, 582–604, and 610–633; these read LFCS…LRSH, FKCP…LGDH, FLCV…RRAH, HSCP…RRTH, YRCL…RFVH, HKCS…LRTH, FPCP…RLTH, YRCG…RLVH, YRCQ…RYHH, and YKCR…LVIH. The C2H2-type 15; degenerate zinc finger occupies 639–662; that stretch reads YRCSSCGAAFPSSLRLREHRCAAA. Residues 670-692 form a C2H2-type 16 zinc finger; the sequence is FECGTCGKKVGSAARLQAHEAAH. Positions 690 to 741 are disordered; sequence AAHAAAGPGEVLAKEPPAPRASRATRTPVAPSPTALSGTTSAAPAAPARRRG. Ser721 bears the Phosphoserine mark. Positions 721-736 are enriched in low complexity; the sequence is SPTALSGTTSAAPAAP. Thr728 carries the phosphothreonine modification. 4 consecutive C2H2-type zinc fingers follow at residues 742 to 764, 770 to 792, 798 to 820, and 826 to 848; these read PECS…RRIH, YPCP…RRLH, FACE…RRIH, and YSCP…RKTH. Arg836 is subject to Asymmetric dimethylarginine.

Belongs to the krueppel C2H2-type zinc-finger protein family.

Its subcellular location is the nucleus. May be involved in transcriptional regulation. The protein is Zinc finger protein 574 (Znf574) of Mus musculus (Mouse).